Reading from the N-terminus, the 276-residue chain is Large ribosomal subunit protein uL2 (276 aa).

The tract at residues 218–255 (PTVRGSAMNPCDHPHGGGEGRTPIGMSSPVTPWGKPAL) is disordered.

Belongs to the universal ribosomal protein uL2 family. As to quaternary structure, part of the 50S ribosomal subunit. Forms a bridge to the 30S subunit in the 70S ribosome.

One of the primary rRNA binding proteins. Required for association of the 30S and 50S subunits to form the 70S ribosome, for tRNA binding and peptide bond formation. It has been suggested to have peptidyltransferase activity; this is somewhat controversial. Makes several contacts with the 16S rRNA in the 70S ribosome. This Clostridium tetani (strain Massachusetts / E88) protein is Large ribosomal subunit protein uL2.